A 2353-amino-acid polypeptide reads, in one-letter code: Nonribosomal peptide synthetase 7 (2353 aa).

The tract at residues 305–684 (TFSALNTRAN…AIEEVEDSAV (380 aa)) is adenylation 1. A Carrier 1 domain is found at 776–853 (RDLTDSEKVV…QVAAAVQPQP (78 aa)). S813 is subject to O-(pantetheine 4'-phosphoryl)serine. Residues 885 to 1147 (EDAFPVTPFQ…LMVAPLRVKV (263 aa)) are condensation 1. Residues 1338–1725 (TYAGLAIKMN…QTNVFRQCAV (388 aa)) are adenylation 2. Residues 1826–1902 (EICSEAEREL…EQAALMVQGQ (77 aa)) enclose the Carrier 2 domain. S1863 carries the O-(pantetheine 4'-phosphoryl)serine modification. A condensation 2 region spans residues 1939–2214 (EDIYPCSPGQ…NGNCANFLPY (276 aa)).

Belongs to the NRP synthetase family.

Nonribosomal peptide synthesis (NRPS) is a key mechanism responsible for the biosynthesis of bioactive metabolites which are potentially contributing to organismal virulence. This chain is Nonribosomal peptide synthetase 7 (NRPS7), found in Aspergillus fumigatus (strain ATCC MYA-4609 / CBS 101355 / FGSC A1100 / Af293) (Neosartorya fumigata).